The sequence spans 444 residues: ATPase PAAT (444 aa).

3 positions are modified to phosphoserine: Ser-177, Ser-182, and Ser-254. Positions 279-300 (SAQPSGEGNTTNHDEGHLMPQN) are disordered. The segment covering 280-289 (AQPSGEGNTT) has biased composition (polar residues). At Ser-302 the chain carries Phosphoserine. A disordered region spans residues 424-444 (PPPGMPLRHYDSRERLSNGER). A compositionally biased stretch (basic and acidic residues) spans 431–444 (RHYDSRERLSNGER).

As to quaternary structure, homodimer. Interacts with ABCB7, ABCB8/MITOSUR and ABCB10.

It is found in the cytoplasm. It localises to the mitochondrion. The catalysed reaction is ATP + H2O = ADP + phosphate + H(+). Functionally, ATPase that regulates mitochondrial ABC transporters ABCB7, ABCB8/MITOSUR and ABCB10. Regulates mitochondrial ferric concentration and heme biosynthesis and plays a role in the maintenance of mitochondrial homeostasis and cell survival. This Mus musculus (Mouse) protein is ATPase PAAT.